A 501-amino-acid polypeptide reads, in one-letter code: MELSYPEKLTLIKLAELKRAKVEELVKESGLEQVAVMRALLGLQAKGLAKLHERSERVVKLTETGMKYAQIGLPEWRALKVLREKGKATLDDLKDVLSEDELKPIVGLLRREGWANVRKEDGKLVLEITEKGREASERPIDKALKLLAERGEVPVKEIEKLVPVNELKRRKIGEEDVITERVAEITEKGEELVKKGLELKKEVSVLTPELIKSGKWREVEFRKFDIKAPVRRIYPGKKQPYRAFLDKIRRRLIEMGFIEMTVDSLIETQFWNFDALFQPQNHPAREWTDTYQLKYPKVGSLPDEELVARVKAAHEHGGDTGSRGWGYVWSPERAMLLMPRAHGTALDARQLAKGVEIPGKYFTIQRVFRPDVLDRTHLIEFNQIDGFVVGEDLNFRHLLGILKRFAVEIAGAKKVKFLPDYYPFTEPSVQMSAYHPELGWVEFGGAGIFREEMTKALGIDVPVIAWGIGIDRLAMFKLGIDDIRYLFSYDLRWLREARLVW.

L-phenylalanine contacts are provided by residues Thr344, 383–385 (QID), and Phe424. Glu426 contacts Mg(2+). Phe449 contributes to the L-phenylalanine binding site.

Belongs to the class-II aminoacyl-tRNA synthetase family. Phe-tRNA synthetase alpha subunit type 2 subfamily. In terms of assembly, tetramer of two alpha and two beta subunits. It depends on Mg(2+) as a cofactor.

It localises to the cytoplasm. The enzyme catalyses tRNA(Phe) + L-phenylalanine + ATP = L-phenylalanyl-tRNA(Phe) + AMP + diphosphate + H(+). This Thermococcus kodakarensis (strain ATCC BAA-918 / JCM 12380 / KOD1) (Pyrococcus kodakaraensis (strain KOD1)) protein is Phenylalanine--tRNA ligase alpha subunit.